Here is a 209-residue protein sequence, read N- to C-terminus: Na(+)-translocating NADH-quinone reductase subunit D (209 aa).

5 consecutive transmembrane segments (helical) span residues 42 to 62, 66 to 86, 103 to 123, 131 to 151, and 178 to 198; these read LVMTIAVTLVTAFSNFFISLI, IPGSVRIIVQMAIIASLVIVV, VFVGLIITNCIVMGRAEAYAM, FMDGIGNGLGYGVILILVGFL, and NGLFLLAPSAFFIIGLLIWGL.

The protein belongs to the NqrDE/RnfAE family. In terms of assembly, composed of six subunits; NqrA, NqrB, NqrC, NqrD, NqrE and NqrF.

It is found in the cell inner membrane. The catalysed reaction is a ubiquinone + n Na(+)(in) + NADH + H(+) = a ubiquinol + n Na(+)(out) + NAD(+). Its function is as follows. NQR complex catalyzes the reduction of ubiquinone-1 to ubiquinol by two successive reactions, coupled with the transport of Na(+) ions from the cytoplasm to the periplasm. NqrA to NqrE are probably involved in the second step, the conversion of ubisemiquinone to ubiquinol. This is Na(+)-translocating NADH-quinone reductase subunit D from Proteus mirabilis (strain HI4320).